Consider the following 397-residue polypeptide: 3-ketoacyl-CoA thiolase, mitochondrial (397 aa).

The N-terminal 16 residues, 1-16 (MALLRGVFIVAAKRTP), are a transit peptide targeting the mitochondrion; not cleaved. The residue at position 25 (Lys-25) is an N6-acetyllysine; alternate. Lys-25 bears the N6-succinyllysine; alternate mark. Lys-45 carries the N6-succinyllysine modification. Residue Cys-92 is the Acyl-thioester intermediate of the active site. A Phosphothreonine modification is found at Thr-119. The residue at position 121 (Ser-121) is a Phosphoserine. A Phosphotyrosine modification is found at Tyr-127. Thr-136 bears the Phosphothreonine mark. 6 positions are modified to N6-acetyllysine; alternate: Lys-137, Lys-143, Lys-158, Lys-171, Lys-191, and Lys-209. N6-succinyllysine; alternate is present on residues Lys-137, Lys-143, Lys-158, Lys-171, Lys-191, and Lys-209. Residues Lys-211, Lys-212, and Lys-214 each carry the N6-succinyllysine modification. CoA-binding residues include Arg-224 and Thr-227. Lys-240 is modified (N6-succinyllysine). N6-acetyllysine is present on Lys-241. Ser-251 contributes to the CoA binding site. An N6-acetyllysine mark is found at Lys-269 and Lys-270. Lys-305 is subject to N6-acetyllysine; alternate. Lys-305 is modified (N6-succinyllysine; alternate). Ser-310 carries the post-translational modification Phosphoserine. Lys-312 carries the post-translational modification N6-acetyllysine; alternate. At Lys-312 the chain carries N6-succinyllysine; alternate. Phosphoserine is present on Ser-333. Lys-340 bears the N6-acetyllysine mark. Phosphoserine is present on Ser-344. Position 375 is an N6-acetyllysine (Lys-375). Cys-382 acts as the Proton donor/acceptor in catalysis.

It belongs to the thiolase-like superfamily. Thiolase family. Homotetramer. Interacts with BNIP3. In terms of tissue distribution, expressed in liver, brown adipose tissue and heart (at protein level).

Its subcellular location is the mitochondrion. It catalyses the reaction an acyl-CoA + acetyl-CoA = a 3-oxoacyl-CoA + CoA. The catalysed reaction is 2 acetyl-CoA = acetoacetyl-CoA + CoA. The enzyme catalyses acetyl-CoA + H2O = acetate + CoA + H(+). It carries out the reaction propanoyl-CoA + H2O = propanoate + CoA + H(+). It catalyses the reaction butanoyl-CoA + H2O = butanoate + CoA + H(+). The catalysed reaction is hexanoyl-CoA + H2O = hexanoate + CoA + H(+). The enzyme catalyses octanoyl-CoA + H2O = octanoate + CoA + H(+). It carries out the reaction decanoyl-CoA + H2O = decanoate + CoA + H(+). It catalyses the reaction dodecanoyl-CoA + H2O = dodecanoate + CoA + H(+). The catalysed reaction is tetradecanoyl-CoA + H2O = tetradecanoate + CoA + H(+). The enzyme catalyses hexadecanoyl-CoA + H2O = hexadecanoate + CoA + H(+). It functions in the pathway lipid metabolism; fatty acid beta-oxidation. The 3-oxoacetyl-CoA thiolase activity is inhibited by acetyl-CoA while the acetyl-CoA hydrolase activity is inhibited by acetoacetyl-CoA. In the production of energy from fats, this is one of the enzymes that catalyzes the last step of the mitochondrial beta-oxidation pathway, an aerobic process breaking down fatty acids into acetyl-CoA. Using free coenzyme A/CoA, catalyzes the thiolytic cleavage of medium- to long-chain unbranched 3-oxoacyl-CoAs into acetyl-CoA and a fatty acyl-CoA shortened by two carbon atoms. Also catalyzes the condensation of two acetyl-CoA molecules into acetoacetyl-CoA and could be involved in the production of ketone bodies. Also displays hydrolase activity on various fatty acyl-CoAs. Thereby, could be responsible for the production of acetate in a side reaction to beta-oxidation. Abolishes BNIP3-mediated apoptosis and mitochondrial damage. This Rattus norvegicus (Rat) protein is 3-ketoacyl-CoA thiolase, mitochondrial (Acaa2).